Consider the following 427-residue polypeptide: Serine/threonine-protein kinase ssn3 (427 aa).

The Protein kinase domain maps to 40-369 (YHIVGFISSG…AQEALEHPYF (330 aa)). ATP-binding positions include 46–54 (ISSGTYGRV) and K70. The active-site Proton acceptor is the D172. Positions 390–399 (RRVTQDDNDI) are enriched in basic and acidic residues. Residues 390 to 427 (RRVTQDDNDIRSGSLPGTKRSGLPDDSLLGRATKRLKE) form a disordered region.

This sequence belongs to the protein kinase superfamily. CMGC Ser/Thr protein kinase family. CDC2/CDKX subfamily. As to quaternary structure, component of the srb8-11 complex, a regulatory module of the Mediator complex. Mg(2+) serves as cofactor.

It is found in the nucleus. The enzyme catalyses L-seryl-[protein] + ATP = O-phospho-L-seryl-[protein] + ADP + H(+). The catalysed reaction is L-threonyl-[protein] + ATP = O-phospho-L-threonyl-[protein] + ADP + H(+). It carries out the reaction [DNA-directed RNA polymerase] + ATP = phospho-[DNA-directed RNA polymerase] + ADP + H(+). Its function is as follows. Component of the srb8-11 complex. The srb8-11 complex is a regulatory module of the Mediator complex which is itself involved in regulation of basal and activated RNA polymerase II-dependent transcription. The srb8-11 complex may be involved in the transcriptional repression of a subset of genes regulated by Mediator. It may inhibit the association of the Mediator complex with RNA polymerase II to form the holoenzyme complex. The srb8-11 complex phosphorylates the C-terminal domain (CTD) of the largest subunit of RNA polymerase II. The polypeptide is Serine/threonine-protein kinase ssn3 (ssn3) (Aspergillus niger (strain ATCC MYA-4892 / CBS 513.88 / FGSC A1513)).